Consider the following 152-residue polypeptide: UPF0756 membrane protein Daud_1310 (152 aa).

Helical transmembrane passes span 14 to 34 (LVGVLAKSHLIAAAACILLFI), 51 to 71 (LELGLLILLLTIMVPLANGKI), 76 to 96 (IIYNLTSIPGLLAILGGALAT), and 112 to 132 (IIFGLIIGSIFGILFLGGMPV).

The protein belongs to the UPF0756 family.

It localises to the cell membrane. The polypeptide is UPF0756 membrane protein Daud_1310 (Desulforudis audaxviator (strain MP104C)).